Here is a 563-residue protein sequence, read N- to C-terminus: 4-hydroxy-7-methoxy-3-oxo-3,4-dihydro-2H-1,4-benzoxazin-2-yl glucoside beta-D-glucosidase 2, chloroplastic (563 aa).

The N-terminal 51 residues, 1-51 (MAPLLAAAMNHAAHPVLRSHLGPNNESFSRHHLSSSPQSSKRRFNLSFTPR), are a transit peptide targeting the chloroplast. Residues 17–43 (LRSHLGPNNESFSRHHLSSSPQSSKRR) form a disordered region. Residues glutamine 89, histidine 193, and 241–242 (NE) contribute to the a beta-D-glucoside site. Catalysis depends on glutamate 242, which acts as the Proton donor. Cysteine 261 and cysteine 267 are oxidised to a cystine. A dimerization region spans residues 322-358 (SFLDEQAKERSMDINLGWFLEPVVRGDYPFSMRSLAR). Residue tyrosine 384 participates in a beta-D-glucoside binding. 2 dimerization regions span residues 391-402 (HIDISPKYSPVL) and 447-450 (KYGN). Residues glutamate 457, tryptophan 508, 515–516 (EW), and tyrosine 524 each bind a beta-D-glucoside. Glutamate 457 serves as the catalytic Nucleophile.

The protein belongs to the glycosyl hydrolase 1 family. In terms of assembly, homo- and heterodimer. Expressed in leaves only starting at day 6 after germination.

It localises to the plastid. It is found in the chloroplast. It catalyses the reaction Hydrolysis of terminal, non-reducing beta-D-glucosyl residues with release of beta-D-glucose.. It carries out the reaction DIMBOA beta-D-glucoside + H2O = DIMBOA + D-glucose. The catalysed reaction is DIBOA beta-D-glucoside + H2O = DIBOA + D-glucose. Beta-glucosidase acting poorly on artificial aryl beta-glucosides. Has no activity toward the chromogenic substrate 6-bromo-2-naphthyl-beta-D-glucoside (6BNGlc). The polypeptide is 4-hydroxy-7-methoxy-3-oxo-3,4-dihydro-2H-1,4-benzoxazin-2-yl glucoside beta-D-glucosidase 2, chloroplastic (GLU2) (Zea mays (Maize)).